The following is a 328-amino-acid chain: 3-dehydroquinate synthase (328 aa).

It belongs to the archaeal-type DHQ synthase family.

It catalyses the reaction 2-amino-2,3,7-trideoxy-D-lyxo-hept-6-ulosonate + NAD(+) + H2O = 3-dehydroquinate + NH4(+) + NADH + H(+). In terms of biological role, catalyzes the oxidative deamination and cyclization of 2-amino-3,7-dideoxy-D-threo-hept-6-ulosonic acid (ADH) to yield 3-dehydroquinate (DHQ), which is fed into the canonical shikimic pathway of aromatic amino acid biosynthesis. In Methanospirillum hungatei JF-1 (strain ATCC 27890 / DSM 864 / NBRC 100397 / JF-1), this protein is 3-dehydroquinate synthase.